A 239-amino-acid chain; its full sequence is Cysteine-rich venom protein ophanin (239 aa).

A signal peptide spans 1–18; the sequence is MIAFTLLSLAAVLQQSFG. An SCP domain is found at 37-165; sequence VDLHNSLRRS…EYSYFYVCQY (129 aa). Disulfide bonds link Cys-74–Cys-152, Cys-91–Cys-166, Cys-147–Cys-163, Cys-185–Cys-192, Cys-188–Cys-197, Cys-201–Cys-234, Cys-210–Cys-228, and Cys-219–Cys-232. The ShKT domain maps to 201–234; sequence CTLYNEYTNCDSLVKQSSCQDEWIKSKCPASCFC.

In terms of tissue distribution, expressed by the venom gland.

It is found in the secreted. In terms of biological role, weakly blocks contraction of smooth muscle elicited by high potassium-induced depolarization, but does not block caffeine-stimulated contraction. May target voltage-gated calcium channels on smooth muscle. The polypeptide is Cysteine-rich venom protein ophanin (Ophiophagus hannah (King cobra)).